We begin with the raw amino-acid sequence, 78 residues long: Small ribosomal subunit protein bS18 (78 aa).

The protein belongs to the bacterial ribosomal protein bS18 family. Part of the 30S ribosomal subunit. Forms a tight heterodimer with protein bS6.

Its function is as follows. Binds as a heterodimer with protein bS6 to the central domain of the 16S rRNA, where it helps stabilize the platform of the 30S subunit. In Parafrankia sp. (strain EAN1pec), this protein is Small ribosomal subunit protein bS18.